Here is a 156-residue protein sequence, read N- to C-terminus: Large ribosomal subunit protein uL30 (156 aa).

Belongs to the universal ribosomal protein uL30 family. Part of the 50S ribosomal subunit.

The chain is Large ribosomal subunit protein uL30 from Thermofilum pendens (strain DSM 2475 / Hrk 5).